Consider the following 505-residue polypeptide: Lysine--tRNA ligase (505 aa).

Positions 415 and 422 each coordinate Mg(2+).

The protein belongs to the class-II aminoacyl-tRNA synthetase family. As to quaternary structure, homodimer. It depends on Mg(2+) as a cofactor.

The protein resides in the cytoplasm. It catalyses the reaction tRNA(Lys) + L-lysine + ATP = L-lysyl-tRNA(Lys) + AMP + diphosphate. In Vibrio parahaemolyticus serotype O3:K6 (strain RIMD 2210633), this protein is Lysine--tRNA ligase.